A 342-amino-acid chain; its full sequence is Nicotinate-nucleotide--dimethylbenzimidazole phosphoribosyltransferase (342 aa).

Catalysis depends on Glu-311, which acts as the Proton acceptor.

It belongs to the CobT family.

It carries out the reaction 5,6-dimethylbenzimidazole + nicotinate beta-D-ribonucleotide = alpha-ribazole 5'-phosphate + nicotinate + H(+). It participates in nucleoside biosynthesis; alpha-ribazole biosynthesis; alpha-ribazole from 5,6-dimethylbenzimidazole: step 1/2. In terms of biological role, catalyzes the synthesis of alpha-ribazole-5'-phosphate from nicotinate mononucleotide (NAMN) and 5,6-dimethylbenzimidazole (DMB). The sequence is that of Nicotinate-nucleotide--dimethylbenzimidazole phosphoribosyltransferase from Shewanella sediminis (strain HAW-EB3).